Here is a 389-residue protein sequence, read N- to C-terminus: LL-diaminopimelate aminotransferase (389 aa).

Y13 and G38 together coordinate substrate. Residues Y67, 101 to 102 (SK), Y126, N176, Y207, and 235 to 237 (SLS) contribute to the pyridoxal 5'-phosphate site. Substrate contacts are provided by K102, Y126, and N176. The residue at position 238 (K238) is an N6-(pyridoxal phosphate)lysine. R246 contributes to the pyridoxal 5'-phosphate binding site. R364 contacts substrate.

It belongs to the class-I pyridoxal-phosphate-dependent aminotransferase family. LL-diaminopimelate aminotransferase subfamily. In terms of assembly, homodimer. It depends on pyridoxal 5'-phosphate as a cofactor.

The enzyme catalyses (2S,6S)-2,6-diaminopimelate + 2-oxoglutarate = (S)-2,3,4,5-tetrahydrodipicolinate + L-glutamate + H2O + H(+). The protein operates within amino-acid biosynthesis; L-lysine biosynthesis via DAP pathway; LL-2,6-diaminopimelate from (S)-tetrahydrodipicolinate (aminotransferase route): step 1/1. In terms of biological role, involved in the synthesis of meso-diaminopimelate (m-DAP or DL-DAP), required for both lysine and peptidoglycan biosynthesis. Catalyzes the direct conversion of tetrahydrodipicolinate to LL-diaminopimelate. This Halothermothrix orenii (strain H 168 / OCM 544 / DSM 9562) protein is LL-diaminopimelate aminotransferase.